We begin with the raw amino-acid sequence, 65 residues long: Small ribosomal subunit protein bS21A (65 aa).

This sequence belongs to the bacterial ribosomal protein bS21 family.

This Francisella tularensis subsp. tularensis (strain FSC 198) protein is Small ribosomal subunit protein bS21A.